The following is a 2415-amino-acid chain: Spectrin alpha chain (2415 aa).

Spectrin repeat units lie at residues 48–150, 154–254, 258–362, 366–464, 471–574, 577–679, 683–784, 788–890, and 894–963; these read RFQY…KLQQ, LVQF…QEKL, HEIQ…KLDE, LHRF…DRRI, DLQL…LLED, RYQQ…KLNE, QQQF…QHLL, QVQQ…QDLD, and QAHQ…RQQE. The SH3 domain maps to 970-1029; it reads TGKECVVALYDYTEKSPREVSMKKGDVLTLLNSNNKDWWKVEVNDRQGFVPAAYIKKIDA. 2 positions are modified to phosphoserine: Ser-1032 and Ser-1034. 11 Spectrin repeats span residues 1079–1177, 1181–1284, 1287–1391, 1394–1496, 1500–1604, 1608–1710, 1714–1816, 1820–1921, 1926–2028, 2040–2141, and 2154–2252; these read VREA…ASQL, HEVQ…EKLL, YDLQ…QLEQ, DLQL…SRLG, TLQQ…KLKE, QRTY…RLNE, LHQF…KLDE, YQQF…GALL, YLQF…DRLL, LYLT…DGEL, and LRKE…NLEQ. EF-hand domains follow at residues 2265–2300 and 2308–2343; these read DSLK…LGYD and QPDP…KETE. Ca(2+)-binding residues include Asp-2278, Asp-2280, Ser-2282, Lys-2284, Glu-2289, Asp-2321, Asn-2323, Asp-2325, Tyr-2327, and Glu-2332.

Belongs to the spectrin family. In terms of assembly, native spectrin molecule is a tetramer composed of two antiparallel heterodimers joined head to head so that each end of the native molecule includes the C-terminus of the alpha subunit and the N-terminus of the beta subunit. Interacts with calmodulin in a calcium-dependent manner, interacts with F-actin and also interacts with Lva. Interacts with Ten-m. A substantial pool of maternal protein in the egg undergoes dynamic changes in distribution early in embryogenesis. In gastrulated embryo, the highest level of protein is found in the respiratory tract cells and the lowest in parts of the forming gut.

The protein resides in the cytoplasm. The protein localises to the cytoskeleton. It localises to the golgi apparatus. It is found in the cell projection. Its subcellular location is the cilium. The protein resides in the flagellum. Functionally, spectrin is the major constituent of the cytoskeletal network underlying the erythrocyte plasma membrane. It associates with band 4.1 and actin to form the cytoskeletal superstructure of the erythrocyte plasma membrane. Essential for larval survival and development. Stabilizes cell to cell interactions that are critical for the maintenance of cell shape and subcellular organization within embryonic tissues. Lva and spectrin may form a Golgi-based scaffold that mediates interaction of Golgi bodies with microtubules and facilitates Golgi-derived membrane secretion required for the formation of furrows during cellularization. The polypeptide is Spectrin alpha chain (alpha-Spec) (Drosophila melanogaster (Fruit fly)).